We begin with the raw amino-acid sequence, 248 residues long: DNA repair protein RecO (248 aa).

This sequence belongs to the RecO family.

Its function is as follows. Involved in DNA repair and RecF pathway recombination. This chain is DNA repair protein RecO, found in Bacillus cereus (strain B4264).